A 121-amino-acid polypeptide reads, in one-letter code: Darcynin homolog (121 aa).

This sequence belongs to the darcynin family.

The protein is Darcynin homolog of Streptomyces avermitilis (strain ATCC 31267 / DSM 46492 / JCM 5070 / NBRC 14893 / NCIMB 12804 / NRRL 8165 / MA-4680).